The chain runs to 587 residues: Phosphomethylpyrimidine synthase (587 aa).

Substrate is bound by residues N218, M247, Y276, H312, 332–334 (SRG), 373–376 (DGLR), and E412. Residue H416 participates in Zn(2+) binding. Position 439 (Y439) interacts with substrate. H480 is a binding site for Zn(2+). Residues C560, C563, and C568 each contribute to the [4Fe-4S] cluster site.

It belongs to the ThiC family. [4Fe-4S] cluster serves as cofactor.

The enzyme catalyses 5-amino-1-(5-phospho-beta-D-ribosyl)imidazole + S-adenosyl-L-methionine = 4-amino-2-methyl-5-(phosphooxymethyl)pyrimidine + CO + 5'-deoxyadenosine + formate + L-methionine + 3 H(+). Its pathway is cofactor biosynthesis; thiamine diphosphate biosynthesis. In terms of biological role, catalyzes the synthesis of the hydroxymethylpyrimidine phosphate (HMP-P) moiety of thiamine from aminoimidazole ribotide (AIR) in a radical S-adenosyl-L-methionine (SAM)-dependent reaction. The protein is Phosphomethylpyrimidine synthase of Porphyromonas gingivalis (strain ATCC 33277 / DSM 20709 / CIP 103683 / JCM 12257 / NCTC 11834 / 2561).